The following is a 248-amino-acid chain: Anamorsin homolog (248 aa).

The tract at residues 4 to 129 (FKGLQKSLYI…ETGSSARLSF (126 aa)) is N-terminal SAM-like domain. Residues 130 to 161 (AKKNASAVNVWKISGDDEELIDEEELLDEEDK) form a linker region. The [2Fe-2S] cluster site is built by C172, C181, C184, and C186. Residues 172-186 (CSTTGKRKACKNCSC) are fe-S binding site A. [4Fe-4S] cluster contacts are provided by C209, C212, C220, and C223. Short sequence motifs (cx2C motif) lie at residues 209–212 (CGNC) and 220–223 (CSTC). The interval 209–223 (CGNCYLGDAFRCSTC) is fe-S binding site B.

It belongs to the anamorsin family. As to quaternary structure, monomer. [2Fe-2S] cluster is required as a cofactor. It depends on [4Fe-4S] cluster as a cofactor.

It localises to the cytoplasm. The protein resides in the mitochondrion intermembrane space. Its function is as follows. Component of the cytosolic iron-sulfur (Fe-S) protein assembly (CIA) machinery. Required for the maturation of extramitochondrial Fe-S proteins. Part of an electron transfer chain functioning in an early step of cytosolic Fe-S biogenesis, facilitating the de novo assembly of a [4Fe-4S] cluster on the cytosolic Fe-S scaffold complex. Electrons are transferred from NADPH via a FAD- and FMN-containing diflavin oxidoreductase. Together with the diflavin oxidoreductase, also required for the assembly of the diferric tyrosyl radical cofactor of ribonucleotide reductase (RNR), probably by providing electrons for reduction during radical cofactor maturation in the catalytic small subunit. This chain is Anamorsin homolog, found in Drosophila yakuba (Fruit fly).